Reading from the N-terminus, the 221-residue chain is Probable septum site-determining protein MinC (221 aa).

The protein belongs to the MinC family. In terms of assembly, interacts with MinD and FtsZ.

In terms of biological role, cell division inhibitor that blocks the formation of polar Z ring septums. Rapidly oscillates between the poles of the cell to destabilize FtsZ filaments that have formed before they mature into polar Z rings. Prevents FtsZ polymerization. This Shewanella halifaxensis (strain HAW-EB4) protein is Probable septum site-determining protein MinC.